The sequence spans 422 residues: Phytoene synthase, chloroplastic (422 aa).

The N-terminal 83 residues, 1 to 83 (MSLASSLVVS…GSVIVASMVA (83 aa)), are a transit peptide targeting the chloroplast.

It belongs to the phytoene/squalene synthase family. In terms of assembly, monomer.

Its subcellular location is the plastid. It is found in the chloroplast. It carries out the reaction 2 (2E,6E,10E)-geranylgeranyl diphosphate = 15-cis-phytoene + 2 diphosphate. It functions in the pathway carotenoid biosynthesis; phytoene biosynthesis; all-trans-phytoene from geranylgeranyl diphosphate: step 1/1. Its function is as follows. Catalyzes the reaction from prephytoene diphosphate to phytoene. This chain is Phytoene synthase, chloroplastic (PSY), found in Cucumis melo (Muskmelon).